Reading from the N-terminus, the 189-residue chain is Potassium-transporting ATPase KdpC subunit (189 aa).

A helical membrane pass occupies residues 10-30 (ITLVFCVFFSVFYILILWLFA).

This sequence belongs to the KdpC family. The system is composed of three essential subunits: KdpA, KdpB and KdpC.

It localises to the cell inner membrane. In terms of biological role, part of the high-affinity ATP-driven potassium transport (or Kdp) system, which catalyzes the hydrolysis of ATP coupled with the electrogenic transport of potassium into the cytoplasm. This subunit acts as a catalytic chaperone that increases the ATP-binding affinity of the ATP-hydrolyzing subunit KdpB by the formation of a transient KdpB/KdpC/ATP ternary complex. The sequence is that of Potassium-transporting ATPase KdpC subunit from Bacteroides thetaiotaomicron (strain ATCC 29148 / DSM 2079 / JCM 5827 / CCUG 10774 / NCTC 10582 / VPI-5482 / E50).